The chain runs to 435 residues: Glutamyl-tRNA(Gln) amidotransferase subunit D (435 aa).

In terms of domain architecture, Asparaginase/glutaminase spans 91–419 (PDVSIISTGG…EMAREMMREN (329 aa)). Catalysis depends on residues Thr101, Thr177, Asp178, and Lys254.

This sequence belongs to the asparaginase 1 family. GatD subfamily. Heterodimer of GatD and GatE.

The catalysed reaction is L-glutamyl-tRNA(Gln) + L-glutamine + ATP + H2O = L-glutaminyl-tRNA(Gln) + L-glutamate + ADP + phosphate + H(+). Functionally, allows the formation of correctly charged Gln-tRNA(Gln) through the transamidation of misacylated Glu-tRNA(Gln) in organisms which lack glutaminyl-tRNA synthetase. The reaction takes place in the presence of glutamine and ATP through an activated gamma-phospho-Glu-tRNA(Gln). The GatDE system is specific for glutamate and does not act on aspartate. The polypeptide is Glutamyl-tRNA(Gln) amidotransferase subunit D (gatD) (Methanothermobacter thermautotrophicus (strain ATCC 29096 / DSM 1053 / JCM 10044 / NBRC 100330 / Delta H) (Methanobacterium thermoautotrophicum)).